Consider the following 321-residue polypeptide: Collectin-43 (321 aa).

A signal peptide spans 1–20 (MLPLPLSILLLLTQSQSFLG). A disordered region spans residues 43 to 163 (PADSLRGHDG…GEKGARGETS (121 aa)). The segment covering 47–65 (LRGHDGRDGKEGPQGEKGD) has biased composition (basic and acidic residues). The Collagen-like domain maps to 49-162 (GHDGRDGKEG…PGEKGARGET (114 aa)). Composition is skewed to gly residues over residues 100-109 (GPEGGVGAPG) and 124-133 (GTPGPGGAIG). The segment covering 147 to 159 (KGDRGDPGEKGAR) has biased composition (basic and acidic residues). One can recognise a C-type lectin domain in the interval 222 to 321 (QLCREAKGQL…REERLVICEF (100 aa)). 2 disulfides stabilise this stretch: Cys224–Cys319 and Cys297–Cys311.

This sequence belongs to the SFTPD family. In terms of assembly, oligomeric complex of 4 set of homotrimers. Post-translationally, hydroxylated. In terms of tissue distribution, liver specific.

It localises to the secreted. Functionally, lectin that binds to various sugars: mannose = ManNAc &gt; fucose &gt; GlcNAc &gt; glucose = maltose &gt; galactose &gt; lactose &gt; GalNAc. Could play a role in immune defense. This Bos taurus (Bovine) protein is Collectin-43 (CL43).